The primary structure comprises 122 residues: Large ribosomal subunit protein uL14 (122 aa).

This sequence belongs to the universal ribosomal protein uL14 family. In terms of assembly, part of the 50S ribosomal subunit. Forms a cluster with proteins L3 and L19. In the 70S ribosome, L14 and L19 interact and together make contacts with the 16S rRNA in bridges B5 and B8.

Functionally, binds to 23S rRNA. Forms part of two intersubunit bridges in the 70S ribosome. The sequence is that of Large ribosomal subunit protein uL14 from Sulfurihydrogenibium sp. (strain YO3AOP1).